A 218-amino-acid chain; its full sequence is Ras-related protein Rab-4A (218 aa).

Residues Gly-23, Thr-24, Gly-25, Lys-26, Ser-27, Cys-28, Ser-42, His-44, and Thr-45 each contribute to the GTP site. Ser-27 is a Mg(2+) binding site. The Switch 1 signature appears at 44-49 (HTIGVE). Positions 45 and 68 each coordinate Mg(2+). Positions 70–79 (AGQERFRSVT) match the Switch 2 motif. Gly-71 is a GTP binding site. 5-glutamyl serotonin is present on Gln-72. 5 residues coordinate GTP: Asn-126, Lys-127, Asp-129, Ala-157, and Leu-158. Phosphoserine is present on Ser-190. Residue Ser-204 is modified to Phosphoserine; by CDK1. Residues Cys-216 and Cys-218 are each lipidated (S-geranylgeranyl cysteine). Position 218 is a cysteine methyl ester (Cys-218).

This sequence belongs to the small GTPase superfamily. Rab family. In terms of assembly, interacts with SGSM1, SGSM2 and SGSM3. Interacts with RAB11FIP1, RABEP1, ZFYVE20 and RUFY1. Interacts (membrane-bound form) with NDRG1; the interaction involves NDRG1 in vesicular recycling of E-cadherin. Interacts (in GTP-bound form) with GRIPAP1 (via N-terminus). Interacts with RABEP1 and RBSN. Does not interact with HPS4. Interacts with RABEP2; this interaction may mediate VEGFR2 cell surface expression. It depends on Mg(2+) as a cofactor. Serotonylation of Gln-72 by TGM2 during activation and aggregation of platelets leads to constitutive activation of GTPase activity. In terms of processing, phosphorylated by CDK1 kinase during mitosis.

It is found in the membrane. It localises to the cytoplasm. Its subcellular location is the early endosome membrane. The protein resides in the recycling endosome membrane. The enzyme catalyses GTP + H2O = GDP + phosphate + H(+). With respect to regulation, regulated by guanine nucleotide exchange factors (GEFs) which promote the exchange of bound GDP for free GTP. Regulated by GTPase activating proteins (GAPs) which increase the GTP hydrolysis activity. Inhibited by GDP dissociation inhibitors (GDIs). In terms of biological role, the small GTPases Rab are key regulators of intracellular membrane trafficking, from the formation of transport vesicles to their fusion with membranes. Rabs cycle between an inactive GDP-bound form and an active GTP-bound form that is able to recruit to membranes different sets of downstream effectors directly responsible for vesicle formation, movement, tethering and fusion. RAB4A is involved in protein transport. Also plays a role in vesicular traffic. Mediates VEGFR2 endosomal trafficking to enhance VEGFR2 signaling. Acts as a regulator of platelet alpha-granule release during activation and aggregation of platelets. This is Ras-related protein Rab-4A from Rattus norvegicus (Rat).